Reading from the N-terminus, the 95-residue chain is Small ribosomal subunit protein bS6 (95 aa).

It belongs to the bacterial ribosomal protein bS6 family.

Its function is as follows. Binds together with bS18 to 16S ribosomal RNA. The protein is Small ribosomal subunit protein bS6 of Oceanobacillus iheyensis (strain DSM 14371 / CIP 107618 / JCM 11309 / KCTC 3954 / HTE831).